The sequence spans 149 residues: Transcription antitermination protein NusB (149 aa).

The protein belongs to the NusB family.

In terms of biological role, involved in transcription antitermination. Required for transcription of ribosomal RNA (rRNA) genes. Binds specifically to the boxA antiterminator sequence of the ribosomal RNA (rrn) operons. This Sphingopyxis alaskensis (strain DSM 13593 / LMG 18877 / RB2256) (Sphingomonas alaskensis) protein is Transcription antitermination protein NusB.